A 132-amino-acid polypeptide reads, in one-letter code: Small ribosomal subunit protein uS9 (132 aa).

Positions Lys101–Arg132 are disordered. Over residues Lys113 to Arg132 the composition is skewed to basic residues.

This sequence belongs to the universal ribosomal protein uS9 family.

This chain is Small ribosomal subunit protein uS9, found in Staphylococcus aureus (strain USA300).